A 208-amino-acid polypeptide reads, in one-letter code: NAD(P)H-hydrate epimerase (208 aa).

Positions 11 to 208 constitute a YjeF N-terminal domain; sequence MRAKDQFTIN…VIVADDMGTY (198 aa). Position 59 to 63 (59 to 63) interacts with (6S)-NADPHX; that stretch reads NNGGD. K(+) contacts are provided by Asn-60 and Asp-122. (6S)-NADPHX-binding positions include 126 to 132, Tyr-137, and Asp-155; that span reads GIGIDRP. Ser-158 contributes to the K(+) binding site.

The protein belongs to the NnrE/AIBP family. The cofactor is K(+).

It carries out the reaction (6R)-NADHX = (6S)-NADHX. The enzyme catalyses (6R)-NADPHX = (6S)-NADPHX. Its function is as follows. Catalyzes the epimerization of the S- and R-forms of NAD(P)HX, a damaged form of NAD(P)H that is a result of enzymatic or heat-dependent hydration. This is a prerequisite for the S-specific NAD(P)H-hydrate dehydratase to allow the repair of both epimers of NAD(P)HX. This is NAD(P)H-hydrate epimerase from Limosilactobacillus fermentum (strain NBRC 3956 / LMG 18251) (Lactobacillus fermentum).